A 297-amino-acid chain; its full sequence is Polyketide transferase ATR5 (297 aa).

The tract at residues 49 to 272 is abhydrolase domain; it reads DVAVWFQKRG…FVLAENKGHM (224 aa).

It belongs to the polyketide transferase af380 family.

It functions in the pathway mycotoxin biosynthesis. In terms of biological role, polyketide transferase; part of the core atranone cluster (CAC) which products are predicted to catalyze most or all steps of atranone synthesis, starting from geranylgeranyl pyrophosphate (GGPP). The initial cyclization of GGPP to dolabellane is probably performed by the terpene cyclase ATR13. The Baeyer-Villiger oxidation near the end of the atranone synthesis, which converts atranones D and E to atranones F and G is predicted to be catalyzed by the monooxygenase ATR8. Of the CAC's other predicted gene products, the reducing PKS ATR6 might synthesize a polyketide chain. This polyketide is probably transferred onto the atranone backbone by the polyketide transferase ATR5. Other predicted CAC products include 4 oxygenases (ATR2, ATR3, ATR4, and ATR14), 3 short-chain reductases (ATR7, ATR9, and ATR10), and a methyltransferase (ATR12). These may all be involved in the various steps of atranone biosynthesis, although their specific roles must await experimental determination. The protein is Polyketide transferase ATR5 of Stachybotrys chlorohalonatus (strain IBT 40285).